The primary structure comprises 585 residues: Probable glucomannan 4-beta-mannosyltransferase 7 (585 aa).

A helical membrane pass occupies residues 87–107 (VIAPTLQVAVWVCMVMSVMLV). Aspartate 188 is a catalytic residue. Residues aspartate 247 and aspartate 249 each contribute to the substrate site. Aspartate 341 is an active-site residue. The next 4 membrane-spanning stretches (helical) occupy residues 420 to 440 (VVAPMVACVLYNIIVPLSVMI), 443 to 463 (LFIPIWGVAYIPMALLIITTI), 534 to 554 (LPEIGFSVFLIFCASYNLIFH), and 563 to 583 (LYLQGLAFLLLGFNFTGNFAC).

The protein belongs to the glycosyltransferase 2 family. Plant cellulose synthase-like A subfamily.

Its subcellular location is the golgi apparatus membrane. It carries out the reaction GDP-mannose + (glucomannan)n = GDP + (glucomannan)n+1.. Its function is as follows. Probable mannan synthase which consists of a 4-beta-mannosyltransferase activity on mannan using GDP-mannose. The beta-1,4-mannan product is the backbone for galactomannan synthesis by galactomannan galactosyltransferase. Galactomannan is a noncellulosic polysaccharides of plant cell wall. This chain is Probable glucomannan 4-beta-mannosyltransferase 7, found in Oryza sativa subsp. japonica (Rice).